The sequence spans 300 residues: ATP-dependent (S)-NAD(P)H-hydrate dehydratase (300 aa).

The YjeF C-terminal domain occupies 14 to 293 (LLTLFKTIVP…NEISAVFRSD (280 aa)). (6S)-NADPHX-binding positions include G114 and 167-173 (NAMEFRR). Residues 198–202 (KGVND) and 219–228 (GSGRRCGGQG) contribute to the ATP site. D229 serves as a coordination point for (6S)-NADPHX.

The protein belongs to the NnrD/CARKD family. Mg(2+) is required as a cofactor.

The enzyme catalyses (6S)-NADHX + ATP = ADP + phosphate + NADH + H(+). It catalyses the reaction (6S)-NADPHX + ATP = ADP + phosphate + NADPH + H(+). Its function is as follows. Catalyzes the dehydration of the S-form of NAD(P)HX at the expense of ATP, which is converted to ADP. Together with NAD(P)HX epimerase, which catalyzes the epimerization of the S- and R-forms, the enzyme allows the repair of both epimers of NAD(P)HX, a damaged form of NAD(P)H that is a result of enzymatic or heat-dependent hydration. This is ATP-dependent (S)-NAD(P)H-hydrate dehydratase from Drosophila pseudoobscura pseudoobscura (Fruit fly).